Here is a 488-residue protein sequence, read N- to C-terminus: Malonate-semialdehyde dehydrogenase (488 aa).

7 residues coordinate NAD(+): Ala150, Phe152, Lys176, Glu179, Arg180, Ser229, and Thr251. The active-site Nucleophile is Cys284. An NAD(+)-binding site is contributed by Glu382.

It belongs to the aldehyde dehydrogenase family. IolA subfamily. In terms of assembly, homotetramer.

The catalysed reaction is 3-oxopropanoate + NAD(+) + CoA + H2O = hydrogencarbonate + acetyl-CoA + NADH + H(+). The enzyme catalyses 2-methyl-3-oxopropanoate + NAD(+) + CoA + H2O = propanoyl-CoA + hydrogencarbonate + NADH + H(+). It functions in the pathway polyol metabolism; myo-inositol degradation into acetyl-CoA; acetyl-CoA from myo-inositol: step 7/7. In terms of biological role, catalyzes the oxidation of malonate semialdehyde (MSA) and methylmalonate semialdehyde (MMSA) into acetyl-CoA and propanoyl-CoA, respectively. Is involved in a myo-inositol catabolic pathway. Bicarbonate, and not CO2, is the end-product of the enzymatic reaction. The chain is Malonate-semialdehyde dehydrogenase from Listeria monocytogenes serotype 4b (strain CLIP80459).